Consider the following 96-residue polypeptide: Large ribosomal subunit protein bL28 (96 aa).

Positions 1-22 are disordered; it reads MSRRCELTGKGPMTGNNVSHAN.

The protein belongs to the bacterial ribosomal protein bL28 family.

The polypeptide is Large ribosomal subunit protein bL28 (Ruegeria sp. (strain TM1040) (Silicibacter sp.)).